The primary structure comprises 150 residues: Globin (150 aa).

A Globin domain is found at 11-150 (PLSAAEKTKI…MICILLRSAY (140 aa)). Positions 74 and 106 each coordinate heme b.

It belongs to the globin family. Monomer.

The sequence is that of Globin from Lampetra fluviatilis (European river lamprey).